Reading from the N-terminus, the 357-residue chain is Uroporphyrinogen decarboxylase (357 aa).

Residues 27-31, Asp77, Tyr154, Ser209, and His330 contribute to the substrate site; that span reads RQAGR.

The protein belongs to the uroporphyrinogen decarboxylase family. In terms of assembly, homodimer.

It is found in the cytoplasm. The catalysed reaction is uroporphyrinogen III + 4 H(+) = coproporphyrinogen III + 4 CO2. It participates in porphyrin-containing compound metabolism; protoporphyrin-IX biosynthesis; coproporphyrinogen-III from 5-aminolevulinate: step 4/4. Catalyzes the decarboxylation of four acetate groups of uroporphyrinogen-III to yield coproporphyrinogen-III. The protein is Uroporphyrinogen decarboxylase of Acinetobacter baumannii (strain ACICU).